Reading from the N-terminus, the 333-residue chain is Anthranilate phosphoribosyltransferase (333 aa).

5-phospho-alpha-D-ribose 1-diphosphate-binding positions include Gly-81, 84-85 (GD), Thr-89, 91-94 (NIST), 109-117 (KHGNRSVSS), and Ala-121. Gly-81 contributes to the anthranilate binding site. A Mg(2+)-binding site is contributed by Ser-93. Asn-112 lines the anthranilate pocket. Arg-167 serves as a coordination point for anthranilate. Mg(2+)-binding residues include Asp-225 and Glu-226.

It belongs to the anthranilate phosphoribosyltransferase family. Homodimer. Mg(2+) is required as a cofactor.

It carries out the reaction N-(5-phospho-beta-D-ribosyl)anthranilate + diphosphate = 5-phospho-alpha-D-ribose 1-diphosphate + anthranilate. It participates in amino-acid biosynthesis; L-tryptophan biosynthesis; L-tryptophan from chorismate: step 2/5. Catalyzes the transfer of the phosphoribosyl group of 5-phosphorylribose-1-pyrophosphate (PRPP) to anthranilate to yield N-(5'-phosphoribosyl)-anthranilate (PRA). This Actinobacillus succinogenes (strain ATCC 55618 / DSM 22257 / CCUG 43843 / 130Z) protein is Anthranilate phosphoribosyltransferase.